A 1220-amino-acid polypeptide reads, in one-letter code: Limbin (1220 aa).

A signal peptide spans 1–29 (MGATGPTGAGGRATWVLAGNILAAALVLG). Residues 30 to 210 (SGPRALPPSF…VLPNHGLHAA (181 aa)) are Extracellular-facing. The disordered stretch occupies residues 38-59 (SFPALGPGSPSRPGPAGPWASS). N-linked (GlcNAc...) asparagine glycosylation is found at Asn100, Asn109, and Asn130. A helical transmembrane segment spans residues 211 to 231 (GFIAAFLISLLLTVAALFFLA). Residues 232–1220 (RGRCLQGGML…KKANRALGLD (989 aa)) are Cytoplasmic-facing. Coiled-coil stretches lie at residues 355–404 (EEYE…SAAE), 563–644 (KQKL…AALD), 854–875 (GELL…AESL), and 920–1005 (QILE…VREE).

In terms of assembly, component of the EvC complex composed of EFCAB7, IQCE, EVC2 and EVC; built from two subcomplexes, EVC2:EVC and EFCAB7:IQCE. Interacts with EVC. Interacts (via N-terminal end) with EFCAB7. Interacts (via N-terminal end) with IQCE. As to expression, expressed in long and cranial bones, kidney and heart. Strongly expressed in proliferating chondrocytes, osteoblasts and osteoclasts.

The protein resides in the cell membrane. It localises to the cytoplasm. The protein localises to the cytoskeleton. Its subcellular location is the cilium basal body. It is found in the cell projection. The protein resides in the cilium. It localises to the cilium membrane. The protein localises to the nucleus. Its function is as follows. Component of the EvC complex that positively regulates ciliary Hedgehog (Hh) signaling. Plays a critical role in bone formation and skeletal development. May be involved in early embryonic morphogenesis. This chain is Limbin (Evc2), found in Mus musculus (Mouse).